The following is a 463-amino-acid chain: Tryprostatin B synthase (463 aa).

Brevianamide F-binding residues include M93 and E101. R112, K200, and Y202 together coordinate dimethylallyl diphosphate. Residue Y204 coordinates brevianamide F. The dimethylallyl diphosphate site is built by K293, Y295, Q379, Y381, Y445, and Y449.

The protein belongs to the tryptophan dimethylallyltransferase family.

The catalysed reaction is brevianamide F + dimethylallyl diphosphate = tryprostatin B + diphosphate. It functions in the pathway mycotoxin biosynthesis. Brevianamide F prenyltransferase; part of the gene cluster that mediates the biosynthesis of fumitremorgins, indole alkaloids that carry not only intriguing chemical structures, but also interesting biological and pharmacological activities. The biosynthesis of fumitremorgin-type alkaloids begins by condensation of the two amino acids L-tryptophan and L-proline to brevianamide F, catalyzed by the non-ribosomal peptide synthetase ftmPS/ftmA. Brevianamide F is then prenylated by the prenyltransferase ftmPT1/ftmB in the presence of dimethylallyl diphosphate, resulting in the formation of tryprostatin B. The three cytochrome P450 monooxygenases, ftmP450-1/ftmC, ftmP450-2/ftmE and ftmP450-3/FtmG, are responsible for the conversion of tryprostatin B to 6-hydroxytryprostatin B, tryprostatin A to fumitremorgin C and fumitremorgin C to 12,13-dihydroxyfumitremorgin C, respectively. The putative methyltransferase ftmMT/ftmD is expected for the conversion of 6-hydroxytryprostatin B to tryprostatin A. FtmPT2/FtmH catalyzes the prenylation of 12,13-dihydroxyfumitre-morgin C in the presence of dimethylallyl diphosphate, resulting in the formation of fumitremorgin B. Fumitremorgin B is further converted to verruculogen by ftmOx1/ftmF via the insertion of an endoperoxide bond between the two prenyl moieties. Finally, verruculogen is further converted to fumitremorgin A by the verruculogen prenyltransferase ftmPT3. The protein is Tryprostatin B synthase of Neosartorya fischeri (strain ATCC 1020 / DSM 3700 / CBS 544.65 / FGSC A1164 / JCM 1740 / NRRL 181 / WB 181) (Aspergillus fischerianus).